The following is a 379-amino-acid chain: Glutamate 5-kinase (379 aa).

Lys-17 contributes to the ATP binding site. Positions 57, 144, and 156 each coordinate substrate. Residue 176 to 177 (SD) coordinates ATP. The PUA domain occupies 282–359 (SGILMIDQGA…EEIESILGYE (78 aa)).

This sequence belongs to the glutamate 5-kinase family.

It is found in the cytoplasm. The enzyme catalyses L-glutamate + ATP = L-glutamyl 5-phosphate + ADP. The protein operates within amino-acid biosynthesis; L-proline biosynthesis; L-glutamate 5-semialdehyde from L-glutamate: step 1/2. In terms of biological role, catalyzes the transfer of a phosphate group to glutamate to form L-glutamate 5-phosphate. The chain is Glutamate 5-kinase from Bartonella henselae (strain ATCC 49882 / DSM 28221 / CCUG 30454 / Houston 1) (Rochalimaea henselae).